The sequence spans 159 residues: Dynein 18 kDa light chain, flagellar outer arm (159 aa).

EF-hand domains lie at 18–53 (EEMD…LGQN), 54–89 (PTEE…NKQM), and 129–159 (ELTV…ALLS). Ca(2+) contacts are provided by Asp-31, Asp-33, Ser-35, Thr-37, Glu-42, Asp-67, Asp-69, Ser-71, Cys-73, and Glu-78.

In terms of assembly, consists of at least 3 heavy chains (alpha, beta and gamma), 2 intermediate chains and 8 light chains.

The protein localises to the cell projection. It localises to the cilium. The protein resides in the flagellum. In terms of biological role, may be involved in the calcium-mediated regulation of dynein motor function. Binds 1 mole of calcium. In Chlamydomonas reinhardtii (Chlamydomonas smithii), this protein is Dynein 18 kDa light chain, flagellar outer arm.